Reading from the N-terminus, the 335-residue chain is Glycerol-3-phosphate dehydrogenase [NAD(P)+] (335 aa).

Residues Ser-10, Phe-11, Arg-31, and Lys-105 each coordinate NADPH. Residues Lys-105, Gly-136, and Ser-138 each coordinate sn-glycerol 3-phosphate. Ala-140 lines the NADPH pocket. Residues Lys-191, Asp-244, Ser-254, Arg-255, and Asn-256 each contribute to the sn-glycerol 3-phosphate site. Lys-191 functions as the Proton acceptor in the catalytic mechanism. Arg-255 contributes to the NADPH binding site. Positions 279 and 281 each coordinate NADPH.

This sequence belongs to the NAD-dependent glycerol-3-phosphate dehydrogenase family.

It is found in the cytoplasm. The enzyme catalyses sn-glycerol 3-phosphate + NAD(+) = dihydroxyacetone phosphate + NADH + H(+). It catalyses the reaction sn-glycerol 3-phosphate + NADP(+) = dihydroxyacetone phosphate + NADPH + H(+). Its pathway is membrane lipid metabolism; glycerophospholipid metabolism. Its function is as follows. Catalyzes the reduction of the glycolytic intermediate dihydroxyacetone phosphate (DHAP) to sn-glycerol 3-phosphate (G3P), the key precursor for phospholipid synthesis. The protein is Glycerol-3-phosphate dehydrogenase [NAD(P)+] of Myxococcus xanthus (strain DK1622).